We begin with the raw amino-acid sequence, 252 residues long: Probable transcriptional regulatory protein Fnod_1106 (252 aa).

The protein belongs to the TACO1 family.

It localises to the cytoplasm. This Fervidobacterium nodosum (strain ATCC 35602 / DSM 5306 / Rt17-B1) protein is Probable transcriptional regulatory protein Fnod_1106.